The following is a 299-amino-acid chain: UDP-N-acetylenolpyruvoylglucosamine reductase (299 aa).

One can recognise an FAD-binding PCMH-type domain in the interval 31–192; the sequence is VGGVAEVVFK…VDATFVGACG (162 aa). Arg-172 is an active-site residue. Ser-221 (proton donor) is an active-site residue. The active site involves Glu-291.

It belongs to the MurB family. Requires FAD as cofactor.

The protein localises to the cytoplasm. It carries out the reaction UDP-N-acetyl-alpha-D-muramate + NADP(+) = UDP-N-acetyl-3-O-(1-carboxyvinyl)-alpha-D-glucosamine + NADPH + H(+). Its pathway is cell wall biogenesis; peptidoglycan biosynthesis. Its function is as follows. Cell wall formation. This Anaplasma marginale (strain St. Maries) protein is UDP-N-acetylenolpyruvoylglucosamine reductase.